Reading from the N-terminus, the 558-residue chain is Factor VII-activating protease (558 aa).

Residues 1 to 23 form the signal peptide; sequence MSVVMLVFRVLLLIALVGNSAIG. 3 EGF-like domains span residues 71 to 107, 109 to 146, and 148 to 186; these read DDDP…SRCQ, VQNK…PDCS, and VLPV…RFCE. 18 disulfide bridges follow: C75-C86, C80-C95, C97-C106, C113-C123, C118-C134, C136-C145, C152-C163, C157-C174, C176-C185, C192-C274, C213-C255, C244-C269, C299-C433, C345-C361, C353-C422, C445-C513, C475-C491, and C503-C531. The 84-residue stretch at 191–274 folds into the Kringle domain; it reads DCYVGDGYSY…KWEYCNVEVC (84 aa). The Peptidase S1 domain occupies 312-553; sequence IYGGFKSTAG…FLNWIKTTMH (242 aa). Active-site charge relay system residues include H360 and D409. The Charge relay system role is filled by S507.

It belongs to the peptidase S1 family. As to quaternary structure, heterodimer; disulfide-linked. Heterodimer of a 50 kDa heavy and a 27 kDa light chain linked by a disulfide bond. In terms of processing, proteolytic cleavage at Gly-23 or Met-27 can give rise to the 50 kDa heavy chain (HC) and cleavage at Arg-311 or Lys-317 can give rise to the 27 kDa light chain (LC). The HC can undergo further proteolytic cleavage giving rise to a 26 kDa fragment. The LC can undergo further proteolytic cleavage at Arg-311 leading to a 17-kDa fragment and at Arg-478 leading to a 8-kDa fragment.

The protein localises to the secreted. Its function is as follows. Cleaves the alpha-chain at multiple sites and the beta-chain between 'Lys-53' and 'Lys-54' but not the gamma-chain of fibrinogen and therefore does not initiate the formation of the fibrin clot and does not cause the fibrinolysis directly. It does not cleave (activate) prothrombin and plasminogen but converts the inactive single chain urinary plasminogen activator (pro-urokinase) to the active two chain form. Activates coagulation factor VII. May function as a tumor suppressor negatively regulating cell proliferation and cell migration. The polypeptide is Factor VII-activating protease (Rattus norvegicus (Rat)).